A 135-amino-acid chain; its full sequence is Basic phospholipase A2 6 (135 aa).

7 disulfide bridges follow: Cys-28–Cys-87, Cys-42–Cys-134, Cys-44–Cys-60, Cys-59–Cys-115, Cys-66–Cys-108, Cys-76–Cys-101, and Cys-94–Cys-106. Ca(2+) is bound by residues Tyr-43, Gly-45, and Gly-47. His-63 is an active-site residue. Asp-64 is a Ca(2+) binding site. Asp-109 is a catalytic residue.

It belongs to the phospholipase A2 family. Group I subfamily. D49 sub-subfamily. It depends on Ca(2+) as a cofactor. Expressed by the venom gland.

Its subcellular location is the secreted. It catalyses the reaction a 1,2-diacyl-sn-glycero-3-phosphocholine + H2O = a 1-acyl-sn-glycero-3-phosphocholine + a fatty acid + H(+). Functionally, snake venom phospholipase A2 (PLA2) that inhibits neuromuscular transmission by blocking acetylcholine release from the nerve termini. PLA2 catalyzes the calcium-dependent hydrolysis of the 2-acyl groups in 3-sn-phosphoglycerides. Very weakly suppress the acetylcholine (ACh)-evoked current mediated by alpha-7-similar nAChRs in L.stagnalis neurons. In Bungarus fasciatus (Banded krait), this protein is Basic phospholipase A2 6.